The following is a 207-amino-acid chain: Putative 3-methyladenine DNA glycosylase (207 aa).

Belongs to the DNA glycosylase MPG family.

This chain is Putative 3-methyladenine DNA glycosylase, found in Listeria monocytogenes serotype 4a (strain HCC23).